The chain runs to 144 residues: Large ribosomal subunit protein uL16 (144 aa).

Residues 1 to 16 (MLIPKRVKYRKQHRGR) are compositionally biased toward basic residues. The tract at residues 1-23 (MLIPKRVKYRKQHRGRPGGGMAK) is disordered.

The protein belongs to the universal ribosomal protein uL16 family. In terms of assembly, part of the 50S ribosomal subunit.

In terms of biological role, binds 23S rRNA and is also seen to make contacts with the A and possibly P site tRNAs. This chain is Large ribosomal subunit protein uL16, found in Pelotomaculum thermopropionicum (strain DSM 13744 / JCM 10971 / SI).